Consider the following 107-residue polypeptide: Nucleoid-associated protein Mlg_1509 (107 aa).

Belongs to the YbaB/EbfC family. Homodimer.

Its subcellular location is the cytoplasm. It is found in the nucleoid. Its function is as follows. Binds to DNA and alters its conformation. May be involved in regulation of gene expression, nucleoid organization and DNA protection. The polypeptide is Nucleoid-associated protein Mlg_1509 (Alkalilimnicola ehrlichii (strain ATCC BAA-1101 / DSM 17681 / MLHE-1)).